A 143-amino-acid polypeptide reads, in one-letter code: uncharacterized protein (143 aa).

The active site involves Cys-12.

It belongs to the ArsC family.

This is an uncharacterized protein from Rhodospirillum rubrum.